The chain runs to 165 residues: V-type proton ATPase 16 kDa proteolipid subunit (165 aa).

Over 1–10 (MPSTFSGDET) the chain is Lumenal. The helical transmembrane segment at 11–33 (APFFGFLGAAAALVFSCMGAAYG) threads the bilayer. At 34 to 55 (TAKSGVGVASMGVMRPELVMKS) the chain is on the cytoplasmic side. A helical transmembrane segment spans residues 56-76 (IVPVVMAGVLGIYGLIIAVII). At 77–95 (STGINPKTKSYYLFDGYAH) the chain is on the lumenal side. A helical membrane pass occupies residues 96 to 117 (LSSGLACGLAGLSAGMAIGIVG). The Cytoplasmic portion of the chain corresponds to 118-129 (DAGVRANAQQPK). The helical transmembrane segment at 130 to 155 (LFVGMILILIFAEALALYGLIVGIIL) threads the bilayer. The Lumenal portion of the chain corresponds to 156-165 (SSRAGQSRAE).

The protein belongs to the V-ATPase proteolipid subunit family. V-ATPase is a heteromultimeric enzyme composed of a peripheral catalytic V1 complex (main components: subunits A, B, C, D, E, and F) attached to an integral membrane V0 proton pore complex (main component: the proteolipid protein; which is present as a hexamer that forms the proton-conducting pore).

It is found in the vacuole membrane. In terms of biological role, proton-conducting pore forming subunit of the membrane integral V0 complex of vacuolar ATPase. V-ATPase is responsible for acidifying a variety of intracellular compartments in eukaryotic cells. The protein is V-type proton ATPase 16 kDa proteolipid subunit of Nicotiana tabacum (Common tobacco).